The chain runs to 370 residues: 4-hydroxy-3-methylbut-2-en-1-yl diphosphate synthase (flavodoxin) (370 aa).

[4Fe-4S] cluster-binding residues include Cys265, Cys268, Cys300, and Glu307.

The protein belongs to the IspG family. Requires [4Fe-4S] cluster as cofactor.

It carries out the reaction (2E)-4-hydroxy-3-methylbut-2-enyl diphosphate + oxidized [flavodoxin] + H2O + 2 H(+) = 2-C-methyl-D-erythritol 2,4-cyclic diphosphate + reduced [flavodoxin]. The protein operates within isoprenoid biosynthesis; isopentenyl diphosphate biosynthesis via DXP pathway; isopentenyl diphosphate from 1-deoxy-D-xylulose 5-phosphate: step 5/6. Functionally, converts 2C-methyl-D-erythritol 2,4-cyclodiphosphate (ME-2,4cPP) into 1-hydroxy-2-methyl-2-(E)-butenyl 4-diphosphate. The sequence is that of 4-hydroxy-3-methylbut-2-en-1-yl diphosphate synthase (flavodoxin) from Symbiobacterium thermophilum (strain DSM 24528 / JCM 14929 / IAM 14863 / T).